A 277-amino-acid chain; its full sequence is Putative envelope-preserving system protein Rv2742c (277 aa).

Basic and acidic residues predominate over residues 31 to 54 (RDENRQRHAQVDVQRRRDQPERGQ). Disordered regions lie at residues 31-70 (RDEN…PDGR), 113-133 (QGSP…RLGR), and 180-210 (RQGS…HTAD). The span at 116–133 (PRRRERRRGQTAHQRLGR) shows a compositional bias: basic residues.

In terms of assembly, interacts with Rv2743c.

Its function is as follows. Involved in preservation of envelope integrity and tolerance to surface stress. Reverses the inhibitory effect of PspA on ClgR activity. Facilitates intracellular growth of M.tuberculosis. The protein is Putative envelope-preserving system protein Rv2742c of Mycobacterium tuberculosis (strain ATCC 25618 / H37Rv).